Here is a 246-residue protein sequence, read N- to C-terminus: MLDQVCQLARNAGDAIMQVYDGTKPMDVVSKADNSPVTAADIAAHTVIMDGLRTLTPDIPVLSEEDPPGWEVRQHWQRYWLVDPLDGTKEFIKRNGEFTVNIALIDHGKPILGVVYAPVMNVMYSAAEGKAWKEECGVRKQIQVRDARPPLVVISRSHADAELKEYLQQLGEHQTTSIGSSLKFCLVAEGQAQLYPRFGPTNIWDTAAGHAVAAAAGAHVHDWQGKPLDYTPRESFLNPGFRVSIY.

Mg(2+) is bound by residues Glu-64, Asp-83, Leu-85, Asp-86, and Asp-205. Position 64 (Glu-64) interacts with substrate. Residues 85–88 (LDGT) and Asp-205 each bind substrate.

This sequence belongs to the inositol monophosphatase superfamily. CysQ family. Requires Mg(2+) as cofactor.

The protein resides in the cell inner membrane. It carries out the reaction adenosine 3',5'-bisphosphate + H2O = AMP + phosphate. In terms of biological role, converts adenosine-3',5'-bisphosphate (PAP) to AMP. This chain is 3'(2'),5'-bisphosphate nucleotidase CysQ, found in Escherichia coli O6:H1 (strain CFT073 / ATCC 700928 / UPEC).